A 264-amino-acid polypeptide reads, in one-letter code: Cancer/testis antigen 55 (264 aa).

The tract at residues 242–264 (SSSGFQDDGGLGRPKRERRSQSI) is disordered. A compositionally biased stretch (basic residues) spans 254–264 (RPKRERRSQSI).

Interacts with GABARAP; this interaction may be important for GABARAP protein stability. Isoform 1 interacts with LAMP2; this interaction may be important for LAMP2 protein stability. In terms of tissue distribution, testis-specific. Expressed in spermatozoa (at protein level).

It localises to the cytoplasm. It is found in the cytoplasmic vesicle. The protein resides in the secretory vesicle. The protein localises to the acrosome. Its subcellular location is the cell projection. It localises to the cilium. It is found in the flagellum. Plays a role in spermatogenesis, possibly acting in the regulation of the autophagy pathway. In Homo sapiens (Human), this protein is Cancer/testis antigen 55 (CT55).